Here is a 205-residue protein sequence, read N- to C-terminus: Translation initiation factor 2 subunit beta (205 aa).

A TRAM domain is found at Gly-145–Asp-203.

The protein belongs to the eIF-2-beta/eIF-5 family. In terms of assembly, heterotrimer composed of an alpha, a beta and a gamma chain.

EIF-2 functions in the early steps of protein synthesis by forming a ternary complex with GTP and initiator tRNA. The protein is Translation initiation factor 2 subunit beta of Picrophilus torridus (strain ATCC 700027 / DSM 9790 / JCM 10055 / NBRC 100828 / KAW 2/3).